The sequence spans 394 residues: NAD(P)H-quinone oxidoreductase subunit H (394 aa).

This sequence belongs to the complex I 49 kDa subunit family. As to quaternary structure, NDH-1 can be composed of about 15 different subunits; different subcomplexes with different compositions have been identified which probably have different functions.

It localises to the cellular thylakoid membrane. It catalyses the reaction a plastoquinone + NADH + (n+1) H(+)(in) = a plastoquinol + NAD(+) + n H(+)(out). The catalysed reaction is a plastoquinone + NADPH + (n+1) H(+)(in) = a plastoquinol + NADP(+) + n H(+)(out). Its function is as follows. NDH-1 shuttles electrons from an unknown electron donor, via FMN and iron-sulfur (Fe-S) centers, to quinones in the respiratory and/or the photosynthetic chain. The immediate electron acceptor for the enzyme in this species is believed to be plastoquinone. Couples the redox reaction to proton translocation, and thus conserves the redox energy in a proton gradient. Cyanobacterial NDH-1 also plays a role in inorganic carbon-concentration. This Thermosynechococcus vestitus (strain NIES-2133 / IAM M-273 / BP-1) protein is NAD(P)H-quinone oxidoreductase subunit H.